Consider the following 142-residue polypeptide: E1B protein, small T-antigen (142 aa).

It belongs to the adenoviridae E1B 19 kDa protein family.

Its subcellular location is the host cell membrane. It localises to the host nucleus envelope. It is found in the host nucleus lamina. In terms of biological role, putative adenovirus Bcl-2 homolog that inhibits apoptosis induced by TNF or FAS pathways, as well as p53-mediated apoptosis. Without E1B 19K function, virus production is compromised because of premature death of host cell. Interacts with Bax protein in cell lysates. The protein is E1B protein, small T-antigen of Homo sapiens (Human).